A 505-amino-acid chain; its full sequence is MITLTGHTLTIEEMKRLLLEGEGVTACPNSMQKVAECREVVEKIVEDGKVVYGITTGFGKFSDVLIQKDDVKALQHNLIQSHACGIGDPFPEEVSRGMLILRANTMLKGVSGVRPLVVNMLLEFVNRKIHPVVPQQGSLGASGDLAPLSHLALVLLGEGEVFYKGKRVHAMVALTEEGLEPIELEAKEGLALINGTQAMTAQGVLSYIEAEATAYQAEFIASMTIEGLQGIIDAFDENVHKARGYKEQVEVASRIRDILHDSKLTTKQGELRVQDAYSLRCIPQVHGASWQVLNYVKEKLEIEMNAATDNPLIFDGGEKVISGGNFHGQPIAFAMDFLKVGMAELANISERRIERLVNPQLNDLPPFLSPEPGLQSGAMIMQYAAASLVSENKTLAHPASVDSIPSSANQEDHVSMGTIASRHAHQIIQNVRRVLSIEMICAMQAAEYRGIENMSTVTKSFYHQGRQQVPSITNDRIFSTDIENIAYWLKTNYSIKERLDVNAAL.

Positions 141–143 (ASG) form a cross-link, 5-imidazolinone (Ala-Gly). Ser-142 carries the 2,3-didehydroalanine (Ser) modification.

Belongs to the PAL/histidase family. Post-translationally, contains an active site 4-methylidene-imidazol-5-one (MIO), which is formed autocatalytically by cyclization and dehydration of residues Ala-Ser-Gly.

It localises to the cytoplasm. It carries out the reaction L-histidine = trans-urocanate + NH4(+). The protein operates within amino-acid degradation; L-histidine degradation into L-glutamate; N-formimidoyl-L-glutamate from L-histidine: step 1/3. This Bacillus cereus (strain AH187) protein is Histidine ammonia-lyase.